The sequence spans 622 residues: Dynein axonemal assembly factor 1 (622 aa).

The segment covering 1–11 (MHPEVSEQQAD) has biased composition (polar residues). The interval 1-80 (MHPEVSEQQA…ARNDRDDRGP (80 aa)) is disordered. Residues 32-42 (VRKEEINETKE) are compositionally biased toward basic and acidic residues. The span at 48–59 (STTSCQSQKQQS) shows a compositional bias: low complexity. The segment covering 62 to 80 (SRLECRSGYARNDRDDRGP) has biased composition (basic and acidic residues). 6 LRR repeats span residues 101–123 (ALND…EEYT), 124–145 (GLRC…QAQS), 146–167 (ELRC…EPLQ), 168–189 (KLDA…SCLP), 190–211 (VLNT…QHLG), and 215–236 (RLCV…SVLE). The region spanning 249 to 288 (NPVTKHIPNYRRTVTVRLKQLTYLDDRPVFPKDRACAEAW) is the LRRCT domain. Positions 326 to 336 (EERKKARDKGE) are enriched in basic and acidic residues. Positions 326–363 (EERKKARDKGETPLPDSEESSSTSPEAQEKPPLGETQE) are disordered. Positions 337 to 351 (TPLPDSEESSSTSPE) are enriched in low complexity. 3 positions are modified to phosphoserine: serine 349, serine 464, and serine 487. Disordered regions lie at residues 481–505 (SSLS…TPTG) and 535–622 (TATT…FGLD). Polar residues-rich tracts occupy residues 535–552 (TATT…TTRP) and 568–578 (EPNQSLPAQSS).

It belongs to the DNAAF1 family.

The protein resides in the cell projection. It is found in the cilium. In terms of biological role, cilium-specific protein required for the stability of the ciliary architecture. Plays a role in cytoplasmic preassembly of dynein arms. Involved in regulation of microtubule-based cilia and actin-based brush border microvilli. The sequence is that of Dynein axonemal assembly factor 1 (Dnaaf1) from Peromyscus californicus (California mouse).